A 432-amino-acid chain; its full sequence is 3-isopropylmalate dehydratase large subunit (432 aa).

3 residues coordinate [4Fe-4S] cluster: Cys-299, Cys-364, and Cys-367.

It belongs to the aconitase/IPM isomerase family. LeuC type 2 subfamily. As to quaternary structure, heterodimer of LeuC and LeuD. [4Fe-4S] cluster serves as cofactor.

The catalysed reaction is (2R,3S)-3-isopropylmalate = (2S)-2-isopropylmalate. Its pathway is amino-acid biosynthesis; L-leucine biosynthesis; L-leucine from 3-methyl-2-oxobutanoate: step 2/4. Catalyzes the isomerization between 2-isopropylmalate and 3-isopropylmalate, via the formation of 2-isopropylmaleate. The protein is 3-isopropylmalate dehydratase large subunit of Aquifex aeolicus (strain VF5).